We begin with the raw amino-acid sequence, 714 residues long: Fatty acid oxidation complex subunit alpha (714 aa).

Residues 1–190 are enoyl-CoA hydratase; that stretch reads MEMASAFTLN…KLGLVDDVVP (190 aa). Residues 306–714 form a 3-hydroxyacyl-CoA dehydrogenase region; it reads APLNSVGILG…FWKTTATDLQ (409 aa).

The protein in the N-terminal section; belongs to the enoyl-CoA hydratase/isomerase family. This sequence in the central section; belongs to the 3-hydroxyacyl-CoA dehydrogenase family. As to quaternary structure, heterotetramer of two alpha chains (FadJ) and two beta chains (FadI).

The protein resides in the cytoplasm. The catalysed reaction is a (3S)-3-hydroxyacyl-CoA = a (2E)-enoyl-CoA + H2O. The enzyme catalyses a 4-saturated-(3S)-3-hydroxyacyl-CoA = a (3E)-enoyl-CoA + H2O. It carries out the reaction a (3S)-3-hydroxyacyl-CoA + NAD(+) = a 3-oxoacyl-CoA + NADH + H(+). It catalyses the reaction (3S)-3-hydroxybutanoyl-CoA = (3R)-3-hydroxybutanoyl-CoA. It functions in the pathway lipid metabolism; fatty acid beta-oxidation. Its function is as follows. Catalyzes the formation of a hydroxyacyl-CoA by addition of water on enoyl-CoA. Also exhibits 3-hydroxyacyl-CoA epimerase and 3-hydroxyacyl-CoA dehydrogenase activities. The sequence is that of Fatty acid oxidation complex subunit alpha from Shigella boydii serotype 4 (strain Sb227).